The sequence spans 142 residues: Large ribosomal subunit protein uL11 (142 aa).

The protein belongs to the universal ribosomal protein uL11 family. In terms of assembly, part of the ribosomal stalk of the 50S ribosomal subunit. Interacts with L10 and the large rRNA to form the base of the stalk. L10 forms an elongated spine to which L12 dimers bind in a sequential fashion forming a multimeric L10(L12)X complex. Post-translationally, one or more lysine residues are methylated.

Forms part of the ribosomal stalk which helps the ribosome interact with GTP-bound translation factors. The polypeptide is Large ribosomal subunit protein uL11 (Photobacterium profundum (strain SS9)).